Reading from the N-terminus, the 552-residue chain is MKKNRERFCNREREFVYKFKVGSQCLELRVPLRFPVQENASHLHGRLMLLHSLPCFIEKDLKEALTQFIEEESLSDYDRDAEASLEAVKSGEVDLHQLASTWAKAYAETTLEHARPEEPSWDEDFADVYHDLIHSPASETLLNLEHNYFVSISELIGERDVELKKLRERQGIEMEKVMQELGKSLTDQDVNSLAAQHFESQQDLENKWSNELKQSTAIQKQEYQEWVIKLHQDLKNPNNSSLSEEIKVQPSQFRESVEAIGRIYEEQRKLEESFTIHLGAQLKTMHNLRLLRADMLDFCKHKRNHRSGVKLHRLQTALSLYSTSLCGLVLLVDNRINSYSGIKRDFATVCQECTDFHFPRIEEQLEVVQQVVLYARTQRRSKLKESLDSGNQNGGNDDKTKNAERNYLNVLPGEFYITRHSNLSEIHVAFHLCVDDHVKSGNITARDPAIMGLRNILKVCCTHDITTISIPLLLVHDMSEEMTIPWCLRRAELVFKCVKGFMMEMASWDGGISRTVQFLVPQSISEEMFYQLSNMLPQIFRVSSTLTLTSKH.

A disordered region spans residues 383 to 403 (LKESLDSGNQNGGNDDKTKNA).

In terms of assembly, component of the FERRY complex composed of five subunits, TBCK, PPP1R21, FERRY3, CRYZL1 and GATD1 with a ratio of 1:2:1:2:4, respectively.

The protein localises to the cytoplasm. It localises to the early endosome. In terms of biological role, component of the FERRY complex (Five-subunit Endosomal Rab5 and RNA/ribosome intermediary). The FERRY complex directly interacts with mRNAs and RAB5A, and functions as a RAB5A effector involved in the localization and the distribution of specific mRNAs most likely by mediating their endosomal transport. The complex recruits mRNAs and ribosomes to early endosomes through direct mRNA-interaction. Plays a role in mast cell degranulation. The chain is FERRY endosomal RAB5 effector complex subunit 3 from Pongo abelii (Sumatran orangutan).